The chain runs to 149 residues: Small ribosomal subunit protein bS18c (149 aa).

The interval 1–23 is disordered; the sequence is MDKITGPFRKSKKSFRKPLPPIQ.

This sequence belongs to the bacterial ribosomal protein bS18 family. In terms of assembly, part of the 30S ribosomal subunit.

The protein localises to the plastid. The chain is Small ribosomal subunit protein bS18c from Cuscuta obtusiflora (Peruvian dodder).